Reading from the N-terminus, the 458-residue chain is tRNA-2-methylthio-N(6)-dimethylallyladenosine synthase (458 aa).

In terms of domain architecture, MTTase N-terminal spans K15–Q134. Residues C24, C60, C97, C175, C179, and C182 each coordinate [4Fe-4S] cluster. The 233-residue stretch at R161–A393 folds into the Radical SAM core domain. The TRAM domain maps to R396–N457.

Belongs to the methylthiotransferase family. MiaB subfamily. As to quaternary structure, monomer. [4Fe-4S] cluster is required as a cofactor.

It localises to the cytoplasm. The enzyme catalyses N(6)-dimethylallyladenosine(37) in tRNA + (sulfur carrier)-SH + AH2 + 2 S-adenosyl-L-methionine = 2-methylsulfanyl-N(6)-dimethylallyladenosine(37) in tRNA + (sulfur carrier)-H + 5'-deoxyadenosine + L-methionine + A + S-adenosyl-L-homocysteine + 2 H(+). In terms of biological role, catalyzes the methylthiolation of N6-(dimethylallyl)adenosine (i(6)A), leading to the formation of 2-methylthio-N6-(dimethylallyl)adenosine (ms(2)i(6)A) at position 37 in tRNAs that read codons beginning with uridine. This is tRNA-2-methylthio-N(6)-dimethylallyladenosine synthase from Bartonella henselae (strain ATCC 49882 / DSM 28221 / CCUG 30454 / Houston 1) (Rochalimaea henselae).